The sequence spans 339 residues: uncharacterized protein (339 aa).

This sequence to bacterial alkanal monooxygenase alpha and beta chains.

This is an uncharacterized protein from Bacillus subtilis (strain 168).